The following is a 382-amino-acid chain: 8-amino-7-oxononanoate synthase (382 aa).

Residues R21 and H131 each coordinate substrate. Pyridoxal 5'-phosphate-binding residues include S178, H206, and T232. N6-(pyridoxal phosphate)lysine is present on K235. T349 contributes to the substrate binding site.

It belongs to the class-II pyridoxal-phosphate-dependent aminotransferase family. BioF subfamily. In terms of assembly, homodimer. It depends on pyridoxal 5'-phosphate as a cofactor.

It carries out the reaction 6-carboxyhexanoyl-[ACP] + L-alanine + H(+) = (8S)-8-amino-7-oxononanoate + holo-[ACP] + CO2. The protein operates within cofactor biosynthesis; biotin biosynthesis. In terms of biological role, catalyzes the decarboxylative condensation of pimeloyl-[acyl-carrier protein] and L-alanine to produce 8-amino-7-oxononanoate (AON), [acyl-carrier protein], and carbon dioxide. This chain is 8-amino-7-oxononanoate synthase, found in Serratia marcescens.